A 443-amino-acid chain; its full sequence is Methylenetetrahydrofolate--tRNA-(uracil-5-)-methyltransferase TrmFO (443 aa).

Residue 8–13 (GAGLAG) coordinates FAD.

The protein belongs to the MnmG family. TrmFO subfamily. The cofactor is FAD.

The protein localises to the cytoplasm. It carries out the reaction uridine(54) in tRNA + (6R)-5,10-methylene-5,6,7,8-tetrahydrofolate + NADH + H(+) = 5-methyluridine(54) in tRNA + (6S)-5,6,7,8-tetrahydrofolate + NAD(+). The enzyme catalyses uridine(54) in tRNA + (6R)-5,10-methylene-5,6,7,8-tetrahydrofolate + NADPH + H(+) = 5-methyluridine(54) in tRNA + (6S)-5,6,7,8-tetrahydrofolate + NADP(+). Functionally, catalyzes the folate-dependent formation of 5-methyl-uridine at position 54 (M-5-U54) in all tRNAs. This is Methylenetetrahydrofolate--tRNA-(uracil-5-)-methyltransferase TrmFO from Thermus thermophilus (strain ATCC 27634 / DSM 579 / HB8).